We begin with the raw amino-acid sequence, 293 residues long: Ribosomal RNA small subunit methyltransferase A (293 aa).

The S-adenosyl-L-methionine site is built by asparagine 29, leucine 31, glycine 56, glutamate 77, aspartate 102, and asparagine 127.

Belongs to the class I-like SAM-binding methyltransferase superfamily. rRNA adenine N(6)-methyltransferase family. RsmA subfamily.

It is found in the cytoplasm. It carries out the reaction adenosine(1518)/adenosine(1519) in 16S rRNA + 4 S-adenosyl-L-methionine = N(6)-dimethyladenosine(1518)/N(6)-dimethyladenosine(1519) in 16S rRNA + 4 S-adenosyl-L-homocysteine + 4 H(+). Specifically dimethylates two adjacent adenosines (A1518 and A1519) in the loop of a conserved hairpin near the 3'-end of 16S rRNA in the 30S particle. May play a critical role in biogenesis of 30S subunits. This is Ribosomal RNA small subunit methyltransferase A from Geobacillus thermodenitrificans (strain NG80-2).